The chain runs to 415 residues: Cyclin-A2 (415 aa).

It belongs to the cyclin family. Cyclin AB subfamily. Interacts with the CDK1 and CDK2 protein kinases to form serine/threonine kinase holoenzyme complexes. As to expression, ubiquitous.

It is found in the nucleus. The protein localises to the cytoplasm. Its function is as follows. Cyclin which controls both the G1/S and the G2/M transition phases of the cell cycle. Functions through the formation of specific serine/threonine kinase holoenzyme complexes with the cyclin-dependent protein kinases CDK1 and CDK2. The cyclin subunit confers the substrate specificity of these complexes and differentially interacts with and activates CDK1 and CDK2 throughout the cell cycle. The sequence is that of Cyclin-A2 (ccna2) from Xenopus laevis (African clawed frog).